Here is a 120-residue protein sequence, read N- to C-terminus: NAD(P)H-quinone oxidoreductase subunit 3, chloroplastic (120 aa).

A run of 3 helical transmembrane segments spans residues 9–29 (IFWA…LISG), 64–84 (MFAL…PWAM), and 88–108 (VLGV…IVGS).

This sequence belongs to the complex I subunit 3 family. As to quaternary structure, NDH is composed of at least 16 different subunits, 5 of which are encoded in the nucleus.

It is found in the plastid. The protein resides in the chloroplast thylakoid membrane. It catalyses the reaction a plastoquinone + NADH + (n+1) H(+)(in) = a plastoquinol + NAD(+) + n H(+)(out). It carries out the reaction a plastoquinone + NADPH + (n+1) H(+)(in) = a plastoquinol + NADP(+) + n H(+)(out). Its function is as follows. NDH shuttles electrons from NAD(P)H:plastoquinone, via FMN and iron-sulfur (Fe-S) centers, to quinones in the photosynthetic chain and possibly in a chloroplast respiratory chain. The immediate electron acceptor for the enzyme in this species is believed to be plastoquinone. Couples the redox reaction to proton translocation, and thus conserves the redox energy in a proton gradient. This is NAD(P)H-quinone oxidoreductase subunit 3, chloroplastic from Liriodendron tulipifera (Tuliptree).